The primary structure comprises 475 residues: MPQTPIFPSMLGSTCSGQVQPEMGEHCGDPVYQDGSLVSGSLEVLIERLVPTLDYYPDKTYIFTFLLSARIFIHPYEILAKVGQMCIKQKQQLESGSEADKAKLKSFAAKIIQLLREWTETFPFDFQDERARKEMKEIAQRITQCDEENGTIKKSISQMTQNVLVVLSTRGQFQEVREKIRQPVSDKGTILKTKPQSAQKDILSVCSDPLILAQQLTTIELERLGNIFPEDLMQIISHMDSLDNHKCRSDVTKTYNLEAYDNWFNCLSMLVATEICKVVKKKQRTRVMEFFIDVARECFNIGNFNSMMAIISGMNLSPVARLKKTWSKVKTAKFDVLEHHMDPSSNFCNYRTALQGATQRSQSANSSREKIVIPVFNLFIKDIFFLHKIHSNRLPNGHINFKKFWEISRQIHDFLTWKQVECPYEKDKKIQTYLLTTPIYTEEALFLASFENEGPDNHMEKDSWKTLRSTLLNRA.

Residues 33–164 (QDGSLVSGSL…SISQMTQNVL (132 aa)) enclose the N-terminal Ras-GEF domain. The 248-residue stretch at 208–455 (DPLILAQQLT…FLASFENEGP (248 aa)) folds into the Ras-GEF domain.

Functionally, guanine nucleotide exchange factor (GEF) with specificity for rap2a and other Ras family proteins (in vitro). Plays a role in cell migration. The protein is Ras-GEF domain-containing family member 1A (rasgef1a) of Xenopus tropicalis (Western clawed frog).